The following is a 384-amino-acid chain: Opsin-3 (384 aa).

The Extracellular segment spans residues 1–62; that stretch reads MATNFTQELY…VSKYWHYVLA (62 aa). The N-linked (GlcNAc...) asparagine glycan is linked to N4. Residues 63 to 83 traverse the membrane as a helical segment; sequence LIYTMLMVTSLTGNGIVIWIF. The Cytoplasmic segment spans residues 84–94; it reads STSKSLRSASN. The chain crosses the membrane as a helical span at residues 95–115; the sequence is MFVINLAVFDLMMMLEMPLLI. At 116-132 the chain is on the extracellular side; that stretch reads MNSFYQRLVGYQLGCDV. Cysteines 130 and 207 form a disulfide. The helical transmembrane segment at 133-153 threads the bilayer; sequence YAVLGSLSGIGGAITNAVIAF. Residues 154-171 lie on the Cytoplasmic side of the membrane; the sequence is DRYKTISSPLDGRINTVQ. Residues 172 to 192 traverse the membrane as a helical segment; that stretch reads AGLLIAFTWFWALPFTILPAF. Residues 193 to 219 are Extracellular-facing; it reads RIWGRFVPEGFLTTCSFDYFTEDQDTE. Residues 220 to 240 form a helical membrane-spanning segment; that stretch reads VFVACIFVWSYCIPMALICYF. At 241-284 the chain is on the cytoplasmic side; it reads YSQLFGAVRLHERMLQEQAKKMNVKSLASNKEDNSRSVEIRIAK. A helical membrane pass occupies residues 285–305; it reads VAFTIFFLFICAWTPYAFVTM. The Extracellular portion of the chain corresponds to 306–312; sequence TGAFGDR. A helical membrane pass occupies residues 313–333; that stretch reads TLLTPIATMIPAVCCKVVSCI. Residues 334–384 are Cytoplasmic-facing; sequence DPWVYAINHPRYRAELQKRLPWMGVREQDPDAVSTTTSVATAGFQPPAAEA.

Belongs to the G-protein coupled receptor 1 family. Opsin subfamily. In terms of tissue distribution, in the retina, expression is essentially uniformly distributed but a higher level is seen in the ventral region where the B-cells are localized.

It is found in the membrane. In terms of biological role, visual pigments are the light-absorbing molecules that mediate vision. They consist of an apoprotein, opsin, covalently linked to cis-retinal. May play a role in photoperiodic photoreception. This is Opsin-3 (OP3) from Manduca sexta (Tobacco hawkmoth).